A 144-amino-acid chain; its full sequence is MKGAKSKTETRSSKLSVTKKPAKGAGRGKAAAKDPNKPKRPASAFFVFMEDFRETFKKENPKNKSVATVGKAAGDKWKSLSDSEKAPYVAKAEKRKVEYEKNIKAYNKKLEEGPKEDEESDKSVSEVNDEDDAEDGSEEEEDDD.

Composition is skewed to basic and acidic residues over residues M1–S12 and A73–K94. 3 disordered regions span residues M1 to A42, K57 to K94, and Y106 to D144. A DNA-binding region (HMG box) is located at residues P38–N107. Position 125 is a phosphoserine (S125). A compositionally biased stretch (acidic residues) spans V127 to D144.

It belongs to the HMGB family. In terms of tissue distribution, mostly expressed in cotyledons, hypocotyls, leaves, and flowers (excluding pedicels), also present in roots and stems.

The protein localises to the nucleus. Its subcellular location is the cytoplasm. It is found in the cytosol. In terms of biological role, binds preferentially double-stranded DNA. Confers sensitivity to salt and drought stresses. The protein is High mobility group B protein 2 (HMGB2) of Arabidopsis thaliana (Mouse-ear cress).